The primary structure comprises 1982 residues: Ras guanine nucleotide exchange factor V (1982 aa).

LRR repeat units follow at residues 1–26, 47–68, 69–94, 105–128, 130–151, 164–187, 188–210, 212–234, 236–257, 261–284, 286–307, 308–330, 331–352, 354–376, and 378–399; these read MGNINSICLNNNGKYRIDSISCSLEG, LTQLLIIRECKLKQIPVNITNL, SNLSELILSDNKLSQLPWSLPPPFKP, NENLVRLDLSNNRFTEFPSSVFVL, NLKQLILCNNQLTNMNVTLCGG, ACQLEELKLSNNNFTIFPSIIGDQ, LTTLKSLDLSGNTITSLPNSFSN, VSLTSLNLKSNKFTCFPPSLCTL, KLVHLNLSCNQILVSPSDHTLG, LPSLEKLELQHNRFAHFPMDILEI, SLRVLKLQDNDIDKIPDKIGNL, LNLNELFLSENKITQLPSTIGEL, INLRKLYLEYNKIGSLPQEFSK, SKLNILILHNNDLKFVPDQLHSL, and QLLRLSLDENQLSSSDQKLIKS. Over 1–1831 the chain is Extracellular; that stretch reads MGNINSICLN…IANAFYELRN (1831 aa). 3 disordered regions span residues 414–436, 457–532, and 615–654; these read YGSTMNGTGTTSSSGSASTSTHG, NQIN…NKKQ, and NNSGGGDSMNGSGGNINNSGGSGSGCGTISGSTTKQRRGS. Low complexity-rich tracts occupy residues 415-436 and 457-495; these read GSTMNGTGTTSSSGSASTSTHG and NQINNNNNNNNNNNNNNNNNNNSSNNNSGTNSLSSTPNG. An LRR 16 repeat occupies 443 to 466; it reads DILLSSVTLNNSILNQINNNNNNN. Polar residues predominate over residues 506 to 520; the sequence is LTISRSLFRGNSSNL. A coiled-coil region spans residues 515–567; the sequence is GNSSNLESEKEDFINKKQQQQQQQQQQQQQQQQQQQQQQQQQQQQQQQQQQLG. Residues 592–615 form an LRR 17 repeat; that stretch reads EDDIQKMQLGLEALSNLETSIGSN. The segment covering 616 to 642 has biased composition (gly residues); sequence NSGGGDSMNGSGGNINNSGGSGSGCGT. LRR repeat units follow at residues 657–684 and 773–796; these read LPPTNAFKLSPNVVSSSYNTLPASVMSG and HSNLSQSLSINNLAHRLPTSLSSS. Disordered stretches follow at residues 756 to 778 and 807 to 829; these read QSSTNSFLPPQHQHHHHHSNLSQ and LQFQQQQQHHHHNHNNHQNSNQP. The GBD/FH3 domain maps to 832 to 1236; it reads TIVPSFSKFK…QIKYSIDRYG (405 aa). LRR repeat units follow at residues 979 to 1003, 1075 to 1100, 1239 to 1263, and 1689 to 1712; these read LLGILQFNLDNAQLQFDEEKVGYCL, SPYVPLVALLRNPIIEMPTKTTVFKI, VPAIGSLVLDGSILQSSGSQSRWVD, and VQNMPAQSIEDDGLKELTELFVDL. Positions 1595–1717 constitute an N-terminal Ras-GEF domain; it reads KDRRVSSVTL…LFVDLSTKSY (123 aa). A Ras-GEF domain is found at 1747-1974; it reads DEIEIARQLS…YEMSLSAEPR (228 aa). A helical transmembrane segment spans residues 1832–1848; it reads YHLLMAIISGLNASPVL. At 1849-1982 the chain is on the cytoplasmic side; the sequence is RLKYTKGKLS…PRNAERYDIQ (134 aa). LRR repeat units follow at residues 1865 to 1888 and 1917 to 1941; these read LDTLEELMSTQSSMKNYRADLAAA and RINFKKLEMYKKTIATLQNFSLFPY.

It localises to the membrane. In terms of biological role, promotes the exchange of Ras-bound GDP by GTP. In Dictyostelium discoideum (Social amoeba), this protein is Ras guanine nucleotide exchange factor V (gefV).